A 298-amino-acid polypeptide reads, in one-letter code: uncharacterized protein (298 aa).

A signal peptide spans 1 to 19 (MFRKFLFIQLLIVTSLVKA). Residues 278 to 298 (RNNPPLKNNNAKSKNSYETYK) are disordered. The segment covering 279–298 (NNPPLKNNNAKSKNSYETYK) has biased composition (low complexity).

The protein to R.prowazekii RP296.

This is an uncharacterized protein from Rickettsia prowazekii (strain Madrid E).